Here is a 572-residue protein sequence, read N- to C-terminus: Arginine--tRNA ligase (572 aa).

The 'HIGH' region signature appears at 122 to 132; the sequence is PNLAKEMHVGH.

Belongs to the class-I aminoacyl-tRNA synthetase family. As to quaternary structure, monomer.

The protein resides in the cytoplasm. The enzyme catalyses tRNA(Arg) + L-arginine + ATP = L-arginyl-tRNA(Arg) + AMP + diphosphate. This Neisseria meningitidis serogroup C / serotype 2a (strain ATCC 700532 / DSM 15464 / FAM18) protein is Arginine--tRNA ligase.